The chain runs to 153 residues: MAKETQLQVEAIKNGTVIDHIPAQIGIKVLKLFDMHNSSQRVTIGLNLPSSALGHKDLLKIENVFINEEQASKLALYAPHATVNQIENYEVVKKLALELPEKINNVFECPNSNCISHNEPVESSFKVFEKKEEIRLKCKYCEKVFSREIVTER.

Residues Cys109, Cys114, Cys138, and Cys141 each contribute to the Zn(2+) site.

Belongs to the PyrI family. In terms of assembly, contains catalytic and regulatory chains. The cofactor is Zn(2+).

In terms of biological role, involved in allosteric regulation of aspartate carbamoyltransferase. This is Aspartate carbamoyltransferase regulatory chain from Vibrio parahaemolyticus serotype O3:K6 (strain RIMD 2210633).